The sequence spans 344 residues: Arginine N-succinyltransferase (344 aa).

Residue Leu-125 participates in succinyl-CoA binding. The Proton donor role is filled by His-229.

Belongs to the arginine N-succinyltransferase family.

It carries out the reaction succinyl-CoA + L-arginine = N(2)-succinyl-L-arginine + CoA + H(+). It participates in amino-acid degradation; L-arginine degradation via AST pathway; L-glutamate and succinate from L-arginine: step 1/5. Its function is as follows. Catalyzes the transfer of succinyl-CoA to arginine to produce N(2)-succinylarginine. This is Arginine N-succinyltransferase from Shigella flexneri serotype 5b (strain 8401).